We begin with the raw amino-acid sequence, 85 residues long: MSSGGLLLLLGLLTLCAELIPVSSRQRHRDCDKPPDKGNCGPVRRAFYYDTRLKTCKAFQYRGCNGNGNHFKSDHLCRCECLEYS.

The first 24 residues, 1-24, serve as a signal peptide directing secretion; the sequence is MSSGGLLLLLGLLTLCAELIPVSS. The 51-residue stretch at 31-81 folds into the BPTI/Kunitz inhibitor domain; sequence CDKPPDKGNCGPVRRAFYYDTRLKTCKAFQYRGCNGNGNHFKSDHLCRCEC. Disulfide bonds link C31-C81, C40-C64, and C56-C77.

Belongs to the venom Kunitz-type family. Heterodimer; disulfide-linked. The A chains have phospholipase A2 activity and the B chains show homology with the basic protease inhibitors. Expressed by the venom gland.

Its subcellular location is the secreted. In terms of biological role, beta-bungarotoxins are presynaptic neurotoxins of the venom. The B chain is homologous to venom basic protease inhibitors but has no protease inhibitor activity and blocks voltage-gated potassium channels (Kv). The polypeptide is Kunitz-type serine protease inhibitor homolog beta-bungarotoxin B3 chain (Bungarus multicinctus (Many-banded krait)).